A 745-amino-acid chain; its full sequence is Poly(A) polymerase alpha (745 aa).

Residues 1–17 (MPFPVTTQGSQQTQPPQ) are compositionally biased toward low complexity. The tract at residues 1 to 22 (MPFPVTTQGSQQTQPPQKHYGI) is disordered. Serine 10 and serine 24 each carry phosphoserine. ATP-binding positions include 100–102 (FGS), threonine 109, 113–115 (DID), aspartate 167, lysine 228, tyrosine 237, and 246–247 (GV). Aspartate 113, aspartate 115, and aspartate 167 together coordinate Mg(2+). Glycyl lysine isopeptide (Lys-Gly) (interchain with G-Cter in SUMO) cross-links involve residues lysine 444, lysine 445, lysine 506, and lysine 507. A Nuclear localization signal 1 motif is present at residues 490–507 (RKQLHQLLPNHVLQKKKK). Residues 508 to 643 (HSTEGVKLTA…TSGNAATKIP (136 aa)) form a ser/Thr-rich region. Positions 523–534 (LDLSMDSDNSMS) are enriched in low complexity. Disordered stretches follow at residues 523-565 (LDLS…AVTA) and 577-704 (SVPQ…SETI). Residues 535-557 (VPSPTSATKTSPLNSSGSSQGRN) show a composition bias toward polar residues. A phosphoserine mark is found at serine 537 and serine 558. Low complexity-rich tracts occupy residues 583–594 (SSESSGGTSSES) and 611–640 (TVSR…NAAT). 2 positions are modified to N6-acetyllysine: lysine 641 and lysine 650. A Nuclear localization signal 2 motif is present at residues 650–665 (KRTSSPHKEESPKKTK). 2 stretches are compositionally biased toward basic and acidic residues: residues 655 to 666 (PHKEESPKKTKT) and 682 to 692 (GHDKTEAKEQL). A required for interaction with NUDT21 region spans residues 677-745 (CLALSGHDKT…KNSIKLRLNR (69 aa)). Low complexity predominate over residues 694–704 (TETSTTQSETI). Position 736 is an N6-acetyllysine; alternate (lysine 736). Lysine 736 is covalently cross-linked (Glycyl lysine isopeptide (Lys-Gly) (interchain with G-Cter in SUMO); alternate). Residue serine 738 is modified to Phosphoserine. An N6-acetyllysine; alternate modification is found at lysine 740. Lysine 740 participates in a covalent cross-link: Glycyl lysine isopeptide (Lys-Gly) (interchain with G-Cter in SUMO); alternate.

This sequence belongs to the poly(A) polymerase family. In terms of assembly, monomer. Found in a complex with CPSF1, FIP1L1 and PAPOLA. Interacts with AHCYL1 and FIP1L1; the interaction with AHCYL1 seems to increase interaction with FIP1L1. Interacts with NUDT21; the interaction is diminished by acetylation. Interacts with KPNB1; the interaction promotes PAP nuclear import and is inhibited by acetylation of PAP. Mg(2+) is required as a cofactor. The cofactor is Mn(2+). Post-translationally, polysumoylated. Varying sumoylation depending on tissue- and cell-type. Highly sumoylated in bladder and NIH 3T3 cells. Sumoylation is required for nuclear localization and enhances PAP stability. Desumoylated by SENP1. Inhibits polymerase activity. In terms of processing, hyperphosphorylation on multiple CDK2 consensus and non-consensus sites in the C-terminal Ser/Thr-rich region represses PAP activity in late M-phase. Phosphorylation/dephosphorylation may regulate the interaction between PAP and CPSF. Acetylated in the C-terminus. Acetylation decreases interaction with NUDT21 and KPNB1, and inhibits nuclear localization through inhibiting binding to the importin alpha/beta complex.

The protein localises to the cytoplasm. The protein resides in the nucleus. The enzyme catalyses RNA(n) + ATP = RNA(n)-3'-adenine ribonucleotide + diphosphate. Its function is as follows. Polymerase that creates the 3'-poly(A) tail of mRNA's. Also required for the endoribonucleolytic cleavage reaction at some polyadenylation sites. May acquire specificity through interaction with a cleavage and polyadenylation specificity factor (CPSF) at its C-terminus. The protein is Poly(A) polymerase alpha (PAPOLA) of Homo sapiens (Human).